Reading from the N-terminus, the 159-residue chain is Ribosomal RNA large subunit methyltransferase H (159 aa).

Residues leucine 76, glycine 108, and 127 to 132 (FSPMTF) contribute to the S-adenosyl-L-methionine site.

It belongs to the RNA methyltransferase RlmH family. In terms of assembly, homodimer.

It localises to the cytoplasm. The enzyme catalyses pseudouridine(1915) in 23S rRNA + S-adenosyl-L-methionine = N(3)-methylpseudouridine(1915) in 23S rRNA + S-adenosyl-L-homocysteine + H(+). Its function is as follows. Specifically methylates the pseudouridine at position 1915 (m3Psi1915) in 23S rRNA. In Alkaliphilus metalliredigens (strain QYMF), this protein is Ribosomal RNA large subunit methyltransferase H.